A 51-amino-acid polypeptide reads, in one-letter code: Insulin (51 aa).

Cystine bridges form between Cys-7/Cys-37, Cys-19/Cys-50, and Cys-36/Cys-41.

The protein belongs to the insulin family. In terms of assembly, heterodimer of a B chain and an A chain linked by two disulfide bonds.

Its subcellular location is the secreted. Insulin decreases blood glucose concentration. It increases cell permeability to monosaccharides, amino acids and fatty acids. It accelerates glycolysis, the pentose phosphate cycle, and glycogen synthesis in liver. This chain is Insulin (INS), found in Saimiri sciureus (Common squirrel monkey).